Consider the following 1766-residue polypeptide: E3 ubiquitin-protein ligase listerin (1766 aa).

Basic residues predominate over residues 1–11 (MGGKNKQRTKG). The disordered stretch occupies residues 1–20 (MGGKNKQRTKGNVRPSSSGR). HEAT repeat units follow at residues 100-138 (KGVL…KVKK), 193-231 (VLQD…SLLA), 292-329 (AEAP…TIED), 335-372 (NARK…KVPP), and 512-549 (EKTL…DEDE). Residues 529 to 567 (KTATKPNNRKSLKVKFSDEDESERNTENGKITEVRSNSD) are disordered. Residues 551 to 566 (ERNTENGKITEVRSNS) are compositionally biased toward basic and acidic residues. HEAT repeat units lie at residues 606–644 (EQHL…ESQE), 672–710 (KDMH…KWIV), 916–953 (QVLI…NRTE), 1184–1227 (HLLP…MIRY), 1314–1355 (GIHN…YISK), and 1406–1447 (SKLM…TQEL). The RING-type zinc-finger motif lies at 1715-1762 (CMICFSVIHGSNYSLPKKACRTCKKKFHSACLYKWFTSSNKSTCPLCR).

Belongs to the LTN1 family. In terms of assembly, component of the ribosome quality control complex (RQC), composed of at least the E3 ubiquitin ligase LTN1 and NEMF associated with the 60S ribosomal subunit. The complex probably also contains TCF25 as well as VCP/p97 and its ubiquitin-binding cofactors.

The protein resides in the cytoplasm. It localises to the cytosol. The catalysed reaction is S-ubiquitinyl-[E2 ubiquitin-conjugating enzyme]-L-cysteine + [acceptor protein]-L-lysine = [E2 ubiquitin-conjugating enzyme]-L-cysteine + N(6)-ubiquitinyl-[acceptor protein]-L-lysine.. Its pathway is protein modification; protein ubiquitination. Its function is as follows. E3 ubiquitin-protein ligase component of the ribosome quality control complex (RQC), a ribosome-associated complex that mediates ubiquitination and extraction of incompletely synthesized nascent chains for proteasomal degradation. Within the RQC complex, LTN1 is recruited to stalled 60S ribosomal subunits by NEMF and mediates ubiquitination of stalled nascent chains. Ubiquitination leads to VCP/p97 recruitment for extraction and degradation of the incomplete translation product. The protein is E3 ubiquitin-protein ligase listerin (LTN1) of Gallus gallus (Chicken).